The primary structure comprises 360 residues: Aminomethyltransferase (360 aa).

This sequence belongs to the GcvT family. In terms of assembly, the glycine cleavage system is composed of four proteins: P, T, L and H.

The enzyme catalyses N(6)-[(R)-S(8)-aminomethyldihydrolipoyl]-L-lysyl-[protein] + (6S)-5,6,7,8-tetrahydrofolate = N(6)-[(R)-dihydrolipoyl]-L-lysyl-[protein] + (6R)-5,10-methylene-5,6,7,8-tetrahydrofolate + NH4(+). The glycine cleavage system catalyzes the degradation of glycine. The polypeptide is Aminomethyltransferase (Pseudomonas aeruginosa (strain ATCC 15692 / DSM 22644 / CIP 104116 / JCM 14847 / LMG 12228 / 1C / PRS 101 / PAO1)).